The primary structure comprises 1066 residues: Probable sucrose-phosphate synthase 4 (1066 aa).

Disordered stretches follow at residues 132–166 and 688–714; these read YAAADMSEDLSEGEKGENINESSSTHDESTRGRMP and PRHPRWQKSDDATEVSEADSPGDSLRD. Basic and acidic residues predominate over residues 143 to 162; it reads EGEKGENINESSSTHDESTR.

The protein belongs to the glycosyltransferase 1 family. As to quaternary structure, homodimer or homotetramer. Expressed in germinating seeds.

It carries out the reaction beta-D-fructose 6-phosphate + UDP-alpha-D-glucose = sucrose 6(F)-phosphate + UDP + H(+). Its pathway is glycan biosynthesis; sucrose biosynthesis; sucrose from D-fructose 6-phosphate and UDP-alpha-D-glucose: step 1/2. With respect to regulation, activity is regulated by phosphorylation and moderated by concentration of metabolites and light. In terms of biological role, plays a role in photosynthetic sucrose synthesis by catalyzing the rate-limiting step of sucrose biosynthesis from UDP-glucose and fructose- 6-phosphate. Involved in the regulation of carbon partitioning in the leaves of plants. May regulate the synthesis of sucrose and therefore play a major role as a limiting factor in the export of photoassimilates out of the leaf. Plays a role for sucrose availability that is essential for plant growth and fiber elongation. The chain is Probable sucrose-phosphate synthase 4 (SPS4) from Oryza sativa subsp. japonica (Rice).